The primary structure comprises 378 residues: Carbamoyl phosphate synthase small chain (378 aa).

The CPSase stretch occupies residues Met1 to Glu189. Positions 47, 241, and 243 each coordinate L-glutamine. A Glutamine amidotransferase type-1 domain is found at His193–Arg378. The active-site Nucleophile is the Cys269. Residues Leu270, Gln273, Asn311, Gly313, and Phe314 each contribute to the L-glutamine site. Active-site residues include His353 and Glu355.

It belongs to the CarA family. Composed of two chains; the small (or glutamine) chain promotes the hydrolysis of glutamine to ammonia, which is used by the large (or ammonia) chain to synthesize carbamoyl phosphate. Tetramer of heterodimers (alpha,beta)4.

The enzyme catalyses hydrogencarbonate + L-glutamine + 2 ATP + H2O = carbamoyl phosphate + L-glutamate + 2 ADP + phosphate + 2 H(+). The catalysed reaction is L-glutamine + H2O = L-glutamate + NH4(+). Its pathway is amino-acid biosynthesis; L-arginine biosynthesis; carbamoyl phosphate from bicarbonate: step 1/1. It functions in the pathway pyrimidine metabolism; UMP biosynthesis via de novo pathway; (S)-dihydroorotate from bicarbonate: step 1/3. In terms of biological role, small subunit of the glutamine-dependent carbamoyl phosphate synthetase (CPSase). CPSase catalyzes the formation of carbamoyl phosphate from the ammonia moiety of glutamine, carbonate, and phosphate donated by ATP, constituting the first step of 2 biosynthetic pathways, one leading to arginine and/or urea and the other to pyrimidine nucleotides. The small subunit (glutamine amidotransferase) binds and cleaves glutamine to supply the large subunit with the substrate ammonia. The polypeptide is Carbamoyl phosphate synthase small chain (Pseudomonas aeruginosa (strain ATCC 15692 / DSM 22644 / CIP 104116 / JCM 14847 / LMG 12228 / 1C / PRS 101 / PAO1)).